We begin with the raw amino-acid sequence, 228 residues long: MILLLLALISATTAFQGDVVNLTLNEQATVTLDECMYFLDTLQNSSTLPPGEYGIKITHSCLGNEQIEIRTNTTTDVITIKVEKDPNPEESLVEAENEVLSLRKEVQRLEGEVSYYKKLFEVLNKINVDLYDKLQNLATENDELKRELELYKSKAGNYSQLIDELRLELSKMNETVRQLQATNEDLQANLTKIDAELSRASANLELFQTLFFVTLSFLVGSAFALMRR.

The first 16 residues, Met-1–Gln-16, serve as a signal peptide directing secretion. Residues Leu-206–Leu-225 form a helical membrane-spanning segment.

It to A.fulgidus AF_1225.

Its subcellular location is the membrane. This is an uncharacterized protein from Archaeoglobus fulgidus (strain ATCC 49558 / DSM 4304 / JCM 9628 / NBRC 100126 / VC-16).